Consider the following 421-residue polypeptide: uncharacterized protein (421 aa).

This sequence belongs to the glycosyltransferase 28 family.

This is an uncharacterized protein from Mycobacterium leprae (strain TN).